Reading from the N-terminus, the 209-residue chain is Molybdenum cofactor guanylyltransferase (209 aa).

Residues leucine 13–glycine 15, lysine 26, asparagine 54, aspartate 74, and aspartate 104 contribute to the GTP site. Mg(2+) is bound at residue aspartate 104.

It belongs to the MobA family. Monomer. Mg(2+) serves as cofactor.

It is found in the cytoplasm. It catalyses the reaction Mo-molybdopterin + GTP + H(+) = Mo-molybdopterin guanine dinucleotide + diphosphate. In terms of biological role, transfers a GMP moiety from GTP to Mo-molybdopterin (Mo-MPT) cofactor (Moco or molybdenum cofactor) to form Mo-molybdopterin guanine dinucleotide (Mo-MGD) cofactor. The sequence is that of Molybdenum cofactor guanylyltransferase from Acinetobacter baumannii (strain ATCC 17978 / DSM 105126 / CIP 53.77 / LMG 1025 / NCDC KC755 / 5377).